The sequence spans 170 residues: Ribosome maturation factor RimM (170 aa).

In terms of domain architecture, PRC barrel spans 97 to 170 (NADEYYWVDL…LVVVDWDPEF (74 aa)).

It belongs to the RimM family. In terms of assembly, binds ribosomal protein uS19.

The protein localises to the cytoplasm. Its function is as follows. An accessory protein needed during the final step in the assembly of 30S ribosomal subunit, possibly for assembly of the head region. Essential for efficient processing of 16S rRNA. May be needed both before and after RbfA during the maturation of 16S rRNA. It has affinity for free ribosomal 30S subunits but not for 70S ribosomes. This is Ribosome maturation factor RimM from Stenotrophomonas maltophilia (strain R551-3).